The sequence spans 497 residues: Bypass of stop codon protein 6 (497 aa).

Residues 1–72 (MDASSVPPKV…KVKTYPLNYQ (72 aa)) are Lumenal-facing. Phosphoserine is present on residues serine 37 and serine 41. Asparagine 49 is a glycosylation site (N-linked (GlcNAc...) asparagine). The helical transmembrane segment at 73–93 (TVPLVKLQVIACLIMFVVFGM) threads the bilayer. The Cytoplasmic segment spans residues 94-144 (NDQTVGALLPTLIEYYHISRVDVSNVFIVQLCGYVMASLSKERLNKHFGMR). A helical transmembrane segment spans residues 145-165 (GGMLLAAGLCIVFLIILATAP). Over 166 to 167 (SS) the chain is Lumenal. Residues 168–188 (FYVCMFCGLPLGLGIGILDST) traverse the membrane as a helical segment. The Cytoplasmic portion of the chain corresponds to 189–205 (GNVLMGSLLVHKNELMG). A helical transmembrane segment spans residues 206–226 (IMHGLYGAAAMVTPPLVSYFV). Residues 227-232 (EWGHWS) lie on the Lumenal side of the membrane. Residues 233-253 (LFFLIPLFFSIIGMIVIFPAF) form a helical membrane-spanning segment. The Cytoplasmic segment spans residues 254–300 (KFETASKYDYLCSVENKESNNDVEEAGDNSLMESTKASPGFFELLRN). Residues 301–321 (PAIFLYSLYLFLYLGAEITTG) form a helical membrane-spanning segment. Residues 322–340 (SWFFSYLLETKSSNKVAMS) lie on the Lumenal side of the membrane. Residues 341 to 361 (YIAASFWTGLTVGRLCLGFVT) traverse the membrane as a helical segment. Over 362 to 373 (ERFFENEYKASK) the chain is Cytoplasmic. A helical membrane pass occupies residues 374–394 (AYAFLTLSSYTLFVLVGLINS). At 395 to 397 (SSV) the chain is on the lumenal side. Residues 398-418 (FYFVVLFFVVFCCGTFIGPLF) form a helical membrane-spanning segment. Residues 419 to 439 (PNASIVALQVLPKRLHVSGVG) lie on the Cytoplasmic side of the membrane. A helical membrane pass occupies residues 440–460 (VAVAVGGCGGAAIPYLAGVIA). Over 461 to 462 (HT) the chain is Lumenal. Residues 463 to 483 (VGIQYIPLLCWIMVALFTLEW) traverse the membrane as a helical segment. The Cytoplasmic portion of the chain corresponds to 484–497 (TLYPKFIKGHEEYF).

The protein belongs to the major facilitator superfamily.

The protein resides in the golgi apparatus. The protein localises to the cis-Golgi network membrane. In terms of biological role, probable transporter. This is Bypass of stop codon protein 6 (BSC6) from Saccharomyces cerevisiae (strain ATCC 204508 / S288c) (Baker's yeast).